The following is a 70-amino-acid chain: DNA-directed RNA polymerases I, II, and III subunit RPABC4 (70 aa).

Residues C31, C34, C48, and C51 each contribute to the Zn(2+) site. The C4-type zinc-finger motif lies at 31–51 (CAECSSKLSLSRTDAVRCKDC).

Belongs to the archaeal Rpo12/eukaryotic RPC10 RNA polymerase subunit family. In terms of assembly, component of the RNA polymerase I (Pol I), RNA polymerase II (Pol II) and RNA polymerase III (Pol III) complexes. Component of the RNA polymerase I (Pol I) complex consisting of 14 subunits: RPA135, RPA190, RPC40, RPA14, RPB5, RPO26, RPA43, RPB8, RPA12, RPB10, RPC19, RPC10, RPA49 and RPA34. The complex is composed of a horseshoe-shaped core containing ten subunits (RPA135, RPA190, RPB5, RPO26, RPB8, RPB10, RPC10, RPA12, RPC19 and RPC40) where RPA135 and RPA190 form the DNA-binding cleft. Outside of the core, RPA14 and RPA43 form the stalk that mediates interactions with transcription initiation factors and newly synthesized RNA. Component of the RNA polymerase II (Pol II) complex consisting of 12 subunits: RPO21, RPB2, RPB3, RPB4, RPB5, RPO26, RPB7, RPB8, RPB9, RPB10 and RPC10. Component of the RNA polymerase III (Pol III) complex consisting of 17 subunits. Interacts, via its C-terminus, with TFIIIC subunit TFC4. Post-translationally, the N-terminus is blocked.

The protein resides in the nucleus. It is found in the nucleolus. The protein localises to the peroxisome. DNA-dependent RNA polymerases catalyze the transcription of DNA into RNA using the four ribonucleoside triphosphates as substrates. Common component of RNA polymerases I, II and III which synthesize ribosomal RNA precursors, mRNA precursors and many functional non-coding RNAs, and a small RNAs, such as 5S rRNA and tRNAs, respectively. RNA polymerases are composed of mobile elements that move relative to each other. In Pol II, the core element with the central large cleft comprises RPB3, RBP10, RPB11, RPB12 and regions of RPB1 and RPB2 forming the active center. This chain is DNA-directed RNA polymerases I, II, and III subunit RPABC4 (RPC10), found in Saccharomyces cerevisiae (strain ATCC 204508 / S288c) (Baker's yeast).